Here is a 508-residue protein sequence, read N- to C-terminus: Light-independent protochlorophyllide reductase subunit B (508 aa).

Aspartate 36 serves as a coordination point for [4Fe-4S] cluster. Aspartate 294 (proton donor) is an active-site residue. Substrate is bound at residue 429 to 430 (GM).

The protein belongs to the ChlB/BchB/BchZ family. In terms of assembly, protochlorophyllide reductase is composed of three subunits; ChlL, ChlN and ChlB. Forms a heterotetramer of two ChlB and two ChlN subunits. [4Fe-4S] cluster serves as cofactor.

It carries out the reaction chlorophyllide a + oxidized 2[4Fe-4S]-[ferredoxin] + 2 ADP + 2 phosphate = protochlorophyllide a + reduced 2[4Fe-4S]-[ferredoxin] + 2 ATP + 2 H2O. Its pathway is porphyrin-containing compound metabolism; chlorophyll biosynthesis (light-independent). Its function is as follows. Component of the dark-operative protochlorophyllide reductase (DPOR) that uses Mg-ATP and reduced ferredoxin to reduce ring D of protochlorophyllide (Pchlide) to form chlorophyllide a (Chlide). This reaction is light-independent. The NB-protein (ChlN-ChlB) is the catalytic component of the complex. The chain is Light-independent protochlorophyllide reductase subunit B from Crocosphaera subtropica (strain ATCC 51142 / BH68) (Cyanothece sp. (strain ATCC 51142)).